A 940-amino-acid polypeptide reads, in one-letter code: Chromatin assembly factor 1 subunit FSM (940 aa).

3 disordered regions span residues 317 to 473 (NVDD…DPCT), 638 to 682 (VDSD…FFVP), and 919 to 940 (KTTQNVNGDTDIPRINLLPSSQ). The span at 320-329 (DSQLQKNTST) shows a compositional bias: polar residues. Residues 329 to 439 (TNEKDTQKAQ…LKKQLAIQKQ (111 aa)) adopt a coiled-coil conformation. The span at 330 to 429 (NEKDTQKAQK…QKRREKEAVQ (100 aa)) shows a compositional bias: basic and acidic residues. The span at 430–440 (LKKQLAIQKQA) shows a compositional bias: low complexity. The segment covering 445–461 (RFFKNKKDSEKLEKPGG) has biased composition (basic and acidic residues). The segment covering 638 to 650 (VDSDDEWEEEDPG) has biased composition (acidic residues).

It belongs to the CHAF1A family. Component of the chromatin assembly factor 1 (CAF-1) complex, composed of FSM (FAS1), FAS2 and MSI1. In embryo, expressed in leaf primordia, coleoptile and radicle. In seedlings, expressed in cell division zone of roots, SAM and leaf primordia. Expressed in floral organ primordia.

The protein resides in the nucleus. Component of the chromatin assembly factor complex (CAF-1) involved in chromatin assembly following DNA replication and DNA repair. Required for several aspects of development, including apical meristem maintenance by regulating the durations of the S- and G2-phases of the cell cycle through its chromatin assembly activity. The sequence is that of Chromatin assembly factor 1 subunit FSM (FSM) from Oryza sativa subsp. japonica (Rice).